We begin with the raw amino-acid sequence, 201 residues long: Proteasome subunit beta type-2 (201 aa).

Met1 is modified (N-acetylmethionine).

It belongs to the peptidase T1B family. The 26S proteasome consists of a 20S proteasome core and two 19S regulatory subunits. The 20S proteasome core is a barrel-shaped complex made of 28 subunits that are arranged in four stacked rings. The two outer rings are each formed by seven alpha subunits, and the two inner rings are formed by seven beta subunits. The proteolytic activity is exerted by three beta-subunits PSMB5, PSMB6 and PSMB7. As to quaternary structure, (Microbial infection) Interacts with HIV-1 protein Tat.

Its subcellular location is the cytoplasm. It localises to the nucleus. Non-catalytic component of the 20S core proteasome complex involved in the proteolytic degradation of most intracellular proteins. This complex plays numerous essential roles within the cell by associating with different regulatory particles. Associated with two 19S regulatory particles, forms the 26S proteasome and thus participates in the ATP-dependent degradation of ubiquitinated proteins. The 26S proteasome plays a key role in the maintenance of protein homeostasis by removing misfolded or damaged proteins that could impair cellular functions, and by removing proteins whose functions are no longer required. Associated with the PA200 or PA28, the 20S proteasome mediates ubiquitin-independent protein degradation. This type of proteolysis is required in several pathways including spermatogenesis (20S-PA200 complex) or generation of a subset of MHC class I-presented antigenic peptides (20S-PA28 complex). This chain is Proteasome subunit beta type-2, found in Homo sapiens (Human).